Consider the following 1329-residue polypeptide: BRCT domain-containing protein At4g02110 (1329 aa).

2 BRCT domains span residues 7–97 (LPPK…SILY) and 104–194 (NGIP…DYEI). Disordered regions lie at residues 295-378 (ANKT…SMER), 393-470 (GEEF…TSEL), 576-645 (EVPE…SPTD), 745-827 (NDVP…ADGK), and 952-1077 (AKKE…KESK). 2 stretches are compositionally biased toward polar residues: residues 323–335 (SLAT…LQRS) and 363–378 (SAFN…SMER). 2 stretches are compositionally biased toward basic and acidic residues: residues 410-422 (VSRK…HHNS) and 600-611 (RMKDKQETELTT). Residues 793-802 (GKSRVKKTKI) are compositionally biased toward basic residues. Basic and acidic residues-rich tracts occupy residues 818 to 827 (DGGDNSADGK) and 971 to 983 (DDNK…EGIV). Positions 986-1004 (SSLQSGKKGSSSRVEVGKS) are enriched in low complexity. The segment covering 1024-1047 (VMKDVGDNSAKEKENIAVDNESRK) has biased composition (basic and acidic residues). Positions 1090–1181 (FQDQEHEPKF…KLLQEEPYEW (92 aa)) constitute a BRCT 3 domain.

The chain is BRCT domain-containing protein At4g02110 from Arabidopsis thaliana (Mouse-ear cress).